Here is a 684-residue protein sequence, read N- to C-terminus: Threonine--tRNA ligase (684 aa).

The 66-residue stretch at 1-66 folds into the TGS domain; sequence MTAVASSAPA…DTDVEVTPVA (66 aa). A catalytic region spans residues 261-567; that stretch reads DHRKLGVELD…LTEHYAGAFP (307 aa). Zn(2+) contacts are provided by cysteine 366, histidine 417, and histidine 544.

It belongs to the class-II aminoacyl-tRNA synthetase family. Homodimer. The cofactor is Zn(2+).

Its subcellular location is the cytoplasm. The catalysed reaction is tRNA(Thr) + L-threonine + ATP = L-threonyl-tRNA(Thr) + AMP + diphosphate + H(+). In terms of biological role, catalyzes the attachment of threonine to tRNA(Thr) in a two-step reaction: L-threonine is first activated by ATP to form Thr-AMP and then transferred to the acceptor end of tRNA(Thr). Also edits incorrectly charged L-seryl-tRNA(Thr). The chain is Threonine--tRNA ligase from Mycolicibacterium smegmatis (strain ATCC 700084 / mc(2)155) (Mycobacterium smegmatis).